We begin with the raw amino-acid sequence, 319 residues long: Aliphatic sulfonates import ATP-binding protein SsuB 1 (319 aa).

The 220-residue stretch at 63-282 folds into the ABC transporter domain; sequence VTLSGVSKRF…ARASAAFAAL (220 aa). Position 95–102 (95–102) interacts with ATP; sequence GRSGCGKS.

The protein belongs to the ABC transporter superfamily. Aliphatic sulfonates importer (TC 3.A.1.17.2) family. As to quaternary structure, the complex is composed of two ATP-binding proteins (SsuB), two transmembrane proteins (SsuC) and a solute-binding protein (SsuA).

It localises to the cell inner membrane. The enzyme catalyses ATP + H2O + aliphatic sulfonate-[sulfonate-binding protein]Side 1 = ADP + phosphate + aliphatic sulfonateSide 2 + [sulfonate-binding protein]Side 1.. Part of the ABC transporter complex SsuABC involved in aliphatic sulfonates import. Responsible for energy coupling to the transport system. The protein is Aliphatic sulfonates import ATP-binding protein SsuB 1 of Burkholderia lata (strain ATCC 17760 / DSM 23089 / LMG 22485 / NCIMB 9086 / R18194 / 383).